Reading from the N-terminus, the 163-residue chain is Nucleotide-binding protein YajQ (163 aa).

This sequence belongs to the YajQ family.

Nucleotide-binding protein. This Salmonella typhi protein is Nucleotide-binding protein YajQ.